The primary structure comprises 310 residues: Protein DOS2 (310 aa).

Basic and acidic residues-rich tracts occupy residues 15 to 26 (DKISNSHTKETG) and 135 to 146 (SNDKDENSKENE). 2 disordered regions span residues 15–45 (DKIS…KTNE) and 131–151 (AEND…AVGG). The BSD domain maps to 176–228 (QLDPFDVDEKTEEICSILQGDKDISKLMNDIVPHKISYKDFWHIYFLQRNKIL). The disordered stretch occupies residues 240 to 310 (KKEKETEEKE…KDDDDDDDWE (71 aa)). Residues 247 to 263 (EKEVEWDDEEEEEDDDK) are compositionally biased toward acidic residues. 2 stretches are compositionally biased toward basic and acidic residues: residues 264–276 (VEAV…KGET) and 284–300 (GLKD…KDES). Residues 301–310 (KDDDDDDDWE) show a composition bias toward acidic residues.

Its function is as follows. Acts in ubiquitin metabolism and is necessary for the control of single-copy DNA replication. The chain is Protein DOS2 (DOS2) from Saccharomyces cerevisiae (strain ATCC 204508 / S288c) (Baker's yeast).